A 226-amino-acid polypeptide reads, in one-letter code: Thiamine-phosphate synthase (226 aa).

Residues 46 to 50 (QFRDK) and Asp-83 contribute to the 4-amino-2-methyl-5-(diphosphooxymethyl)pyrimidine site. The Mg(2+) site is built by Asp-84 and Asp-103. Residue Ser-122 coordinates 4-amino-2-methyl-5-(diphosphooxymethyl)pyrimidine. 149-151 (TQS) contributes to the 2-[(2R,5Z)-2-carboxy-4-methylthiazol-5(2H)-ylidene]ethyl phosphate binding site. Position 152 (Lys-152) interacts with 4-amino-2-methyl-5-(diphosphooxymethyl)pyrimidine. Residues Gly-181 and 201–202 (IT) contribute to the 2-[(2R,5Z)-2-carboxy-4-methylthiazol-5(2H)-ylidene]ethyl phosphate site.

Belongs to the thiamine-phosphate synthase family. Mg(2+) is required as a cofactor.

The enzyme catalyses 2-[(2R,5Z)-2-carboxy-4-methylthiazol-5(2H)-ylidene]ethyl phosphate + 4-amino-2-methyl-5-(diphosphooxymethyl)pyrimidine + 2 H(+) = thiamine phosphate + CO2 + diphosphate. The catalysed reaction is 2-(2-carboxy-4-methylthiazol-5-yl)ethyl phosphate + 4-amino-2-methyl-5-(diphosphooxymethyl)pyrimidine + 2 H(+) = thiamine phosphate + CO2 + diphosphate. It carries out the reaction 4-methyl-5-(2-phosphooxyethyl)-thiazole + 4-amino-2-methyl-5-(diphosphooxymethyl)pyrimidine + H(+) = thiamine phosphate + diphosphate. Its pathway is cofactor biosynthesis; thiamine diphosphate biosynthesis; thiamine phosphate from 4-amino-2-methyl-5-diphosphomethylpyrimidine and 4-methyl-5-(2-phosphoethyl)-thiazole: step 1/1. In terms of biological role, condenses 4-methyl-5-(beta-hydroxyethyl)thiazole monophosphate (THZ-P) and 2-methyl-4-amino-5-hydroxymethyl pyrimidine pyrophosphate (HMP-PP) to form thiamine monophosphate (TMP). The polypeptide is Thiamine-phosphate synthase (Haemophilus influenzae (strain ATCC 51907 / DSM 11121 / KW20 / Rd)).